We begin with the raw amino-acid sequence, 163 residues long: Nucleotide-binding protein HAPS_2236 (163 aa).

Belongs to the YajQ family.

Its function is as follows. Nucleotide-binding protein. The polypeptide is Nucleotide-binding protein HAPS_2236 (Glaesserella parasuis serovar 5 (strain SH0165) (Haemophilus parasuis)).